Here is an 80-residue protein sequence, read N- to C-terminus: MKADIHPNYRDVVFHDVTSDFKILTRSTMATKETIQWEDGNEYPLVKVEISSASHPFYTGKHKVIDTSGRIDKFQKRYAR.

This sequence belongs to the bacterial ribosomal protein bL31 family. Type B subfamily. Part of the 50S ribosomal subunit.

This Stenotrophomonas maltophilia (strain K279a) protein is Large ribosomal subunit protein bL31B.